We begin with the raw amino-acid sequence, 283 residues long: 1-deoxypentalenic acid 11-beta-hydroxylase (283 aa).

Position 117 (R117) interacts with substrate. Residues H135 and D137 each coordinate Fe cation. 2-oxoglutarate contacts are provided by residues 135 to 137 and W151; that span reads HQD. R186 is a binding site for substrate. Fe cation is bound at residue H224. S226 and R238 together coordinate 2-oxoglutarate. A disordered region spans residues 251-283; the sequence is HRGFNALTPWPESAKDASKGIMSKITGTPTTAE.

The protein belongs to the PhyH family. Fe cation serves as cofactor. The cofactor is L-ascorbate.

The enzyme catalyses 1-deoxypentalenate + 2-oxoglutarate + O2 = 1-deoxy-11beta-hydroxypentalenate + succinate + CO2. It functions in the pathway antibiotic biosynthesis; pentalenolactone biosynthesis. Catalyzes the conversion of 1-deoxypentalenic acid to 11-beta-hydroxy-1-deoxypentalenic acid in the biosynthesis of pentalenolactone antibiotic. The chain is 1-deoxypentalenic acid 11-beta-hydroxylase (pntH) from Streptomyces arenae.